Reading from the N-terminus, the 236-residue chain is Leucyl/phenylalanyl-tRNA--protein transferase (236 aa).

This sequence belongs to the L/F-transferase family.

The protein resides in the cytoplasm. It carries out the reaction N-terminal L-lysyl-[protein] + L-leucyl-tRNA(Leu) = N-terminal L-leucyl-L-lysyl-[protein] + tRNA(Leu) + H(+). It catalyses the reaction N-terminal L-arginyl-[protein] + L-leucyl-tRNA(Leu) = N-terminal L-leucyl-L-arginyl-[protein] + tRNA(Leu) + H(+). The enzyme catalyses L-phenylalanyl-tRNA(Phe) + an N-terminal L-alpha-aminoacyl-[protein] = an N-terminal L-phenylalanyl-L-alpha-aminoacyl-[protein] + tRNA(Phe). Its function is as follows. Functions in the N-end rule pathway of protein degradation where it conjugates Leu, Phe and, less efficiently, Met from aminoacyl-tRNAs to the N-termini of proteins containing an N-terminal arginine or lysine. The protein is Leucyl/phenylalanyl-tRNA--protein transferase of Aliivibrio salmonicida (strain LFI1238) (Vibrio salmonicida (strain LFI1238)).